The following is a 1335-amino-acid chain: Bifunctional autolysin (1335 aa).

Residues 1–29 (MAKKFNYKLPSMVALTLFGTAFTAHQANA) form the signal peptide. 3 disordered regions span residues 51–88 (QAEK…QSTT), 100–262 (NEIS…KYKE), and 514–535 (WGTT…NNKL). Composition is skewed to polar residues over residues 58-88 (EVTQ…QSTT), 100-127 (NEIS…VTKN), 143-155 (TDTN…QSVA), 176-223 (TASQ…NASG), and 244-258 (SLNN…TTSY). The segment at 303–863 (VSSQKTSSLP…LSTQSTPAPK (561 aa)) is N-acetylmuramoyl-L-alanine amidase. Low complexity predominate over residues 515 to 531 (GTTSTKPSQPSKPSGGT). 7 consecutive GW domains span residues 533 to 610 (NKLT…YNTA), 612 to 686 (APVK…TASK), 700 to 774 (TVTN…YNTA), 776 to 850 (SPVK…APSK), 868 to 943 (STQT…TQNI), 945 to 1020 (KQTQ…QNST), and 1023 to 1096 (QSTP…KEKI). Residues 864–1335 (QVKPSTQTVN…GKYFEIPTYK (472 aa)) are endo-beta-N-acetylglucosaminidase.

The protein in the N-terminal section; belongs to the N-acetylmuramoyl-L-alanine amidase 2 family. In the C-terminal section; belongs to the glycosyl hydrolase 73 family. In terms of assembly, oligomer; forms a ring structure at the cell surface which is important for efficient partitioning of daughter cells after cell division. Undergoes proteolytic processing to generate the two extracellular lytic enzymes, probably at the septal region on the cell surface.

It localises to the secreted. The catalysed reaction is Hydrolyzes the link between N-acetylmuramoyl residues and L-amino acid residues in certain cell-wall glycopeptides.. The enzyme catalyses an N(4)-(oligosaccharide-(1-&gt;3)-[oligosaccharide-(1-&gt;6)]-beta-D-Man-(1-&gt;4)-beta-D-GlcNAc-(1-&gt;4)-alpha-D-GlcNAc)-L-asparaginyl-[protein] + H2O = an oligosaccharide-(1-&gt;3)-[oligosaccharide-(1-&gt;6)]-beta-D-Man-(1-&gt;4)-D-GlcNAc + N(4)-(N-acetyl-beta-D-glucosaminyl)-L-asparaginyl-[protein]. Its function is as follows. Endohydrolysis of the di-N-acetylchitobiosyl unit in high-mannose glycopeptides and glycoproteins containing the -[(Man)5(GlcNAc)2]-Asn structure. One N-acetyl-D-glucosamine residue remains attached to the protein; the rest of the oligosaccharide is released intact. Cleaves the peptidoglycan connecting the daughter cells at the end of the cell division cycle, resulting in the separation of the two newly divided cells. Acts as an autolysin in penicillin-induced lysis. As a bacterial surface-associated protein, mediates attachment to polystyrene surfaces, contributing to biofilm formation. Also has vitronectin-binding activity. The sequence is that of Bifunctional autolysin (atl) from Staphylococcus epidermidis.